A 473-amino-acid polypeptide reads, in one-letter code: Photosystem II CP43 reaction center protein (473 aa).

The propeptide occupies 1-14; it reads MKTLYSLRRSYPVE. N-acetylthreonine is present on Thr15. Thr15 carries the post-translational modification Phosphothreonine. The next 5 helical transmembrane spans lie at 69-93, 134-155, 178-200, 255-275, and 291-312; these read LFEVAHFVPEKPMYEQGLILLPHLA, LIGPETLEESFPFFGYVWKDRN, KALYFGGVYDTWAPGGGDVRKIT, KPFAWARRAFVWSGEAYLSYS, and WFNNTVYPSEFYGPTGPEASQA. Glu367 is a binding site for [CaMn4O5] cluster. Residues 447–471 traverse the membrane as a helical segment; it reads RARAAAAGFEKGIDRDFEPVLSMTP.

This sequence belongs to the PsbB/PsbC family. PsbC subfamily. PSII is composed of 1 copy each of membrane proteins PsbA, PsbB, PsbC, PsbD, PsbE, PsbF, PsbH, PsbI, PsbJ, PsbK, PsbL, PsbM, PsbT, PsbX, PsbY, PsbZ, Psb30/Ycf12, at least 3 peripheral proteins of the oxygen-evolving complex and a large number of cofactors. It forms dimeric complexes. Requires Binds multiple chlorophylls and provides some of the ligands for the Ca-4Mn-5O cluster of the oxygen-evolving complex. It may also provide a ligand for a Cl- that is required for oxygen evolution. PSII binds additional chlorophylls, carotenoids and specific lipids. as cofactor.

The protein localises to the plastid. It is found in the chloroplast thylakoid membrane. Its function is as follows. One of the components of the core complex of photosystem II (PSII). It binds chlorophyll and helps catalyze the primary light-induced photochemical processes of PSII. PSII is a light-driven water:plastoquinone oxidoreductase, using light energy to abstract electrons from H(2)O, generating O(2) and a proton gradient subsequently used for ATP formation. The protein is Photosystem II CP43 reaction center protein of Pinus thunbergii (Japanese black pine).